The sequence spans 261 residues: 6-carboxyhexanoate--CoA ligase (261 aa).

It belongs to the BioW family. Homodimer. It depends on Mg(2+) as a cofactor.

It catalyses the reaction heptanedioate + ATP + CoA = 6-carboxyhexanoyl-CoA + AMP + diphosphate. Its pathway is metabolic intermediate metabolism; pimeloyl-CoA biosynthesis; pimeloyl-CoA from pimelate: step 1/1. Functionally, catalyzes the transformation of pimelate into pimeloyl-CoA with concomitant hydrolysis of ATP to AMP. This chain is 6-carboxyhexanoate--CoA ligase, found in Bacillus licheniformis (strain ATCC 14580 / DSM 13 / JCM 2505 / CCUG 7422 / NBRC 12200 / NCIMB 9375 / NCTC 10341 / NRRL NRS-1264 / Gibson 46).